A 157-amino-acid polypeptide reads, in one-letter code: S-ribosylhomocysteine lyase (157 aa).

Residues His-54, His-58, and Cys-124 each contribute to the Fe cation site.

The protein belongs to the LuxS family. As to quaternary structure, homodimer. Fe cation is required as a cofactor.

The enzyme catalyses S-(5-deoxy-D-ribos-5-yl)-L-homocysteine = (S)-4,5-dihydroxypentane-2,3-dione + L-homocysteine. In terms of biological role, involved in the synthesis of autoinducer 2 (AI-2) which is secreted by bacteria and is used to communicate both the cell density and the metabolic potential of the environment. The regulation of gene expression in response to changes in cell density is called quorum sensing. Catalyzes the transformation of S-ribosylhomocysteine (RHC) to homocysteine (HC) and 4,5-dihydroxy-2,3-pentadione (DPD). In Pediococcus pentosaceus (strain ATCC 25745 / CCUG 21536 / LMG 10740 / 183-1w), this protein is S-ribosylhomocysteine lyase.